The sequence spans 368 residues: Probable leucine aminopeptidase ARB_03492 (368 aa).

The N-terminal stretch at 1 to 18 is a signal peptide; that stretch reads MKVSAIAAVAALAAVAVA. N92 is a glycosylation site (N-linked (GlcNAc...) asparagine). Zn(2+) contacts are provided by H172 and D191. N192 and N216 each carry an N-linked (GlcNAc...) asparagine glycan. Zn(2+)-binding residues include E230 and D257. C301 and C305 are joined by a disulfide. Position 334 (H334) interacts with Zn(2+).

Belongs to the peptidase M28 family. M28E subfamily. In terms of assembly, monomer. Requires Zn(2+) as cofactor.

The protein localises to the secreted. In terms of biological role, probable extracellular aminopeptidase which contributes to pathogenicity. This is Probable leucine aminopeptidase ARB_03492 from Arthroderma benhamiae (strain ATCC MYA-4681 / CBS 112371) (Trichophyton mentagrophytes).